The sequence spans 316 residues: Transcription initiation factor IIB (316 aa).

Residues 7–38 (FRLRCPVCGSTDIVFNEETGEYVCARCGTIVL) form a TFIIB-type zinc finger. Positions 11, 14, 30, and 33 each coordinate Zn(2+). The segment at 51–73 (FTPEERERRGRTGAPLSPTLHDH) is disordered. 2 repeat units span residues 124-207 (NELD…TKEL) and 218-299 (DHIP…EIMK).

It belongs to the TFIIB family.

In terms of biological role, stabilizes TBP binding to an archaeal box-A promoter. Also responsible for recruiting RNA polymerase II to the pre-initiation complex (DNA-TBP-TFIIB). The protein is Transcription initiation factor IIB of Ignicoccus hospitalis (strain KIN4/I / DSM 18386 / JCM 14125).